The primary structure comprises 204 residues: Allatotropin (204 aa).

Residues 1–20 (MNLTMQLAVIVAVCLCLAEG) form the signal peptide. Positions 21–35 (APDVRLTRTKQQRPT) are excised as a propeptide. The segment at 47-83 (RGFGKRDRPHPRAERDVDHQAPSARPNRGTPTFKSPT) is disordered. Position 49 is a phenylalanine amide (phenylalanine 49). Residues 50 to 65 (GKRDRPHPRAERDVDH) show a composition bias toward basic and acidic residues. Residues 53 to 204 (DRPHPRAERD…LSSEELLRNF (152 aa)) constitute a propeptide that is removed on maturation.

As to expression, expressed extensively in the brain, frontal ganglion and terminal ganglion of the day 2 fifth instar larva (at protein level). Not expressed in the larval brain after day 4 of the fifth instar, or in the brain of the pupa or adult. Expression in the terminal ganglion is localized to cells in the posterior portion of the seventh neuromere of day 2 fifth instar larvae. In the pupa and adult expression is detected in the medial region of neuromere 6, the dorsal medial region of neuromere 7, and the posterior neuromere of the terminal ganglion (at protein level). In the frontal ganglion expression decreases in the wandering larvae and is present at low levels in during pupal ecdysis, but is not detected in the adult. Expressed in the subesophageal ganglion of day 2 fifth instar larva, but not at any time before or after day 2. Not expressed in the abdominal ganglia 1-6 of the day 2 fifth instar larva (at protein level). Expressed in the anterior neuromeres of the pterothoracic ganglion in pupa but not in adult (at protein level). Expressed in the unfused abdominal ganglia of day 10 pupae, and in pharate adult is expressed in median neurosecretory cells M1, M2 and M5, but not in median neurosecretory cells M3 and M4 (at protein level). Not expressed in the differentiated median neurosecretory cells M5 of the larva (at protein level). In the pharate adult brain isoform 3 is the predominant form, with lower levels of isoform 2 and very low levels of isoform 1 detected. In the pharate adult nerve cord isoform 3 is the predominant form, with lower levels of isoform 2 and no isoform 1 detected. In the pharate adult frontal ganglion isoform 3 is expressed, but not isoform 1 and isoform 2.

The protein localises to the secreted. Neuropeptide stimulator of juvenile hormone synthesis. Cardioregulatory neurohormone that increases heart beat rate in the adult but not in the larva. Inhibits active ion transport in the midgut of feeding fourth instar and day 2 fifth instar larva, but not in the midgut of pharate or wandering fifth instar larva. This chain is Allatotropin, found in Manduca sexta (Tobacco hawkmoth).